A 435-amino-acid polypeptide reads, in one-letter code: Serine--tRNA ligase (435 aa).

238-240 (TAE) contributes to the L-serine binding site. 269–271 (RKE) serves as a coordination point for ATP. An L-serine-binding site is contributed by glutamate 292. Residue 356 to 359 (EISS) participates in ATP binding. Serine 391 provides a ligand contact to L-serine.

It belongs to the class-II aminoacyl-tRNA synthetase family. Type-1 seryl-tRNA synthetase subfamily. In terms of assembly, homodimer. The tRNA molecule binds across the dimer.

It localises to the cytoplasm. It carries out the reaction tRNA(Ser) + L-serine + ATP = L-seryl-tRNA(Ser) + AMP + diphosphate + H(+). The catalysed reaction is tRNA(Sec) + L-serine + ATP = L-seryl-tRNA(Sec) + AMP + diphosphate + H(+). Its pathway is aminoacyl-tRNA biosynthesis; selenocysteinyl-tRNA(Sec) biosynthesis; L-seryl-tRNA(Sec) from L-serine and tRNA(Sec): step 1/1. Catalyzes the attachment of serine to tRNA(Ser). Is also able to aminoacylate tRNA(Sec) with serine, to form the misacylated tRNA L-seryl-tRNA(Sec), which will be further converted into selenocysteinyl-tRNA(Sec). The protein is Serine--tRNA ligase of Leuconostoc mesenteroides subsp. mesenteroides (strain ATCC 8293 / DSM 20343 / BCRC 11652 / CCM 1803 / JCM 6124 / NCDO 523 / NBRC 100496 / NCIMB 8023 / NCTC 12954 / NRRL B-1118 / 37Y).